Reading from the N-terminus, the 327-residue chain is Ribonucleoside-diphosphate reductase small chain (327 aa).

Residues aspartate 70, glutamate 101, and histidine 104 each contribute to the Fe cation site. Tyrosine 108 is a catalytic residue. The Fe cation site is built by glutamate 164, glutamate 198, and histidine 201.

Belongs to the ribonucleoside diphosphate reductase small chain family. In terms of assembly, heterotetramer composed of a homodimer of the large subunit (R1) and a homodimer of the small subunit (R2). Larger multisubunit protein complex are also active, composed of (R1)n(R2)n. The cofactor is Fe cation.

It carries out the reaction a 2'-deoxyribonucleoside 5'-diphosphate + [thioredoxin]-disulfide + H2O = a ribonucleoside 5'-diphosphate + [thioredoxin]-dithiol. Functionally, ribonucleoside-diphosphate reductase holoenzyme provides the precursors necessary for viral DNA synthesis. Allows virus growth in non-dividing cells. Catalyzes the biosynthesis of deoxyribonucleotides from the corresponding ribonucleotides. The sequence is that of Ribonucleoside-diphosphate reductase small chain from Ornithodoros (relapsing fever ticks).